The primary structure comprises 603 residues: Insulin-like growth factor-binding protein complex acid labile subunit (603 aa).

An N-terminal signal peptide occupies residues 1–23 (MALRTGGPALVVLLAFWVALGPC). The region spanning 32-74 (ASADAEGPQCPVACTCSHDDYTDELSVFCSSKNLTHLPDDIPV) is the LRRNT domain. Cystine bridges form between Cys-41–Cys-47 and Cys-45–Cys-60. Residues Asn-64, Asn-85, and Asn-96 are each glycosylated (N-linked (GlcNAc...) asparagine). LRR repeat units follow at residues 75 to 96 (STRALWLDGNNLSSIPSAAFQN), 99 to 120 (SLDFLNLQGSWLRSLEPQALLG), 123 to 144 (NLYYLHLERNRLRNLAVGLFTH), 147 to 168 (SLASLSLSSNLLGRLEEGLFQG), 171 to 192 (HLWDLNLGWNSLVVLPDTVFQG), 195 to 216 (NLHELVLAGNKLTYLQPALFCG), 219 to 240 (ELRELDLSRNALRSVKANVFVH), 243 to 264 (RLQKLYLDRNLITAVAPGAFLG), 267 to 288 (ALRWLDLSHNRVAGLMEDTFPG), 291 to 312 (GLHVLRLAHNAIASLRPRTFKD), 315 to 336 (FLEELQLGHNRIRQLGERTFEG), 339 to 360 (QLEVLTLNDNQITEVRVGAFSG), 363 to 384 (NVAVMNLSGNCLRSLPERVFQG), 387 to 408 (KLHSLHLEHSCLGHVRLHTFAG), 411 to 432 (GLRRLFLRDNSISSIEEQSLAG), 435 to 456 (ELLELDLTTNRLTHLPRQLFQG), 459 to 480 (HLEYLLLSYNQLTTLSAEVLGP), 483 to 504 (RAFWLDISHNHLETLAEGLFSS), and 507 to 528 (RVRYLSLRNNSLQTFSPQPGLE). Asn-368 is a glycosylation site (N-linked (GlcNAc...) asparagine). Residue Asn-515 is glycosylated (N-linked (GlcNAc...) asparagine). The 69-residue stretch at 535-603 (NPWDCSCPLK…DVSETHFVHC (69 aa)) folds into the LRRCT domain. Cystine bridges form between Cys-539/Cys-581, Cys-541/Cys-603, and Cys-565/Cys-570. Asn-578 and Asn-586 each carry an N-linked (GlcNAc...) asparagine glycan.

Forms a ternary complex with IGF1 and IGFBP3. In terms of tissue distribution, brain, kidney, lung, heart, spleen, muscle and liver.

It is found in the secreted. It localises to the extracellular space. In terms of biological role, may have an important role in regulating the access of circulating IGFs to the tissues. The polypeptide is Insulin-like growth factor-binding protein complex acid labile subunit (Igfals) (Rattus norvegicus (Rat)).